Here is a 232-residue protein sequence, read N- to C-terminus: Enolase-phosphatase E1 (232 aa).

Belongs to the HAD-like hydrolase superfamily. MasA/MtnC family. As to quaternary structure, monomer. It depends on Mg(2+) as a cofactor.

The enzyme catalyses 5-methylsulfanyl-2,3-dioxopentyl phosphate + H2O = 1,2-dihydroxy-5-(methylsulfanyl)pent-1-en-3-one + phosphate. It participates in amino-acid biosynthesis; L-methionine biosynthesis via salvage pathway; L-methionine from S-methyl-5-thio-alpha-D-ribose 1-phosphate: step 3/6. It functions in the pathway amino-acid biosynthesis; L-methionine biosynthesis via salvage pathway; L-methionine from S-methyl-5-thio-alpha-D-ribose 1-phosphate: step 4/6. Bifunctional enzyme that catalyzes the enolization of 2,3-diketo-5-methylthiopentyl-1-phosphate (DK-MTP-1-P) into the intermediate 2-hydroxy-3-keto-5-methylthiopentenyl-1-phosphate (HK-MTPenyl-1-P), which is then dephosphorylated to form the acireductone 1,2-dihydroxy-3-keto-5-methylthiopentene (DHK-MTPene). In Xylella fastidiosa (strain Temecula1 / ATCC 700964), this protein is Enolase-phosphatase E1.